Consider the following 586-residue polypeptide: Eukaryotic translation initiation factor 3 subunit D (586 aa).

The interval 102 to 176 (SAKRTFGRGG…DKPQRTREPS (75 aa)) is disordered. The span at 162–174 (GWKDYDKPQRTRE) shows a compositional bias: basic and acidic residues. An RNA gate region spans residues 301–315 (SLDLVTVNENAADAP). Positions 567 to 586 (EEEEEVAAEEQEAAEEEAEE) are disordered.

The protein belongs to the eIF-3 subunit D family. As to quaternary structure, component of the eukaryotic translation initiation factor 3 (eIF-3) complex.

The protein localises to the cytoplasm. In terms of biological role, mRNA cap-binding component of the eukaryotic translation initiation factor 3 (eIF-3) complex, which is involved in protein synthesis of a specialized repertoire of mRNAs and, together with other initiation factors, stimulates binding of mRNA and methionyl-tRNAi to the 40S ribosome. The eIF-3 complex specifically targets and initiates translation of a subset of mRNAs involved in cell proliferation. In the eIF-3 complex, eif3d specifically recognizes and binds the 7-methylguanosine cap of a subset of mRNAs. The polypeptide is Eukaryotic translation initiation factor 3 subunit D (Aspergillus niger (strain ATCC MYA-4892 / CBS 513.88 / FGSC A1513)).